A 282-amino-acid chain; its full sequence is UDP-3-O-acyl-N-acetylglucosamine deacetylase (282 aa).

3 residues coordinate Zn(2+): histidine 81, histidine 239, and aspartate 243. Histidine 266 serves as the catalytic Proton donor.

Belongs to the LpxC family. Zn(2+) serves as cofactor.

The catalysed reaction is a UDP-3-O-[(3R)-3-hydroxyacyl]-N-acetyl-alpha-D-glucosamine + H2O = a UDP-3-O-[(3R)-3-hydroxyacyl]-alpha-D-glucosamine + acetate. The protein operates within glycolipid biosynthesis; lipid IV(A) biosynthesis; lipid IV(A) from (3R)-3-hydroxytetradecanoyl-[acyl-carrier-protein] and UDP-N-acetyl-alpha-D-glucosamine: step 2/6. Catalyzes the hydrolysis of UDP-3-O-myristoyl-N-acetylglucosamine to form UDP-3-O-myristoylglucosamine and acetate, the committed step in lipid A biosynthesis. This Chlamydia pneumoniae (Chlamydophila pneumoniae) protein is UDP-3-O-acyl-N-acetylglucosamine deacetylase.